We begin with the raw amino-acid sequence, 289 residues long: Polyisoprenoid diphosphate/phosphate phosphohydrolase PLPP6 (289 aa).

The interval Met1–Pro81 is disordered. Residues Met1–Pro126 lie on the Cytoplasmic side of the membrane. Phosphoserine occurs at positions 23, 30, and 64. A helical transmembrane segment spans residues Leu127–Cys147. Over Leu148–Glu158 the chain is Lumenal. A helical membrane pass occupies residues Val159–Gly179. The interval Lys178 to Pro186 is phosphatase sequence motif I. At Leu180–His222 the chain is on the cytoplasmic side. Positions Pro205–His208 are phosphatase sequence motif II. The active-site Proton donors is the His208. The chain crosses the membrane as a helical span at residues Leu223–Ser243. The phosphatase sequence motif III stretch occupies residues Ser243–Asp254. Residues Arg244–Asp254 lie on the Lumenal side of the membrane. His250 serves as the catalytic Nucleophile. Residues Val255 to Ser275 form a helical membrane-spanning segment. Over Pro276–Pro289 the chain is Cytoplasmic.

The protein belongs to the PA-phosphatase related phosphoesterase family. Phosphorylation by PKC activates the phosphatase activity towards presqualene diphosphate.

It is found in the endoplasmic reticulum membrane. The protein localises to the nucleus envelope. The protein resides in the nucleus inner membrane. The catalysed reaction is presqualene diphosphate + H2O = presqualene phosphate + phosphate + H(+). The enzyme catalyses presqualene phosphate + H2O = presqualene alcohol + phosphate. It carries out the reaction (2E,6E)-farnesyl diphosphate + H2O = (2E,6E)-farnesyl phosphate + phosphate + H(+). It catalyses the reaction (2E,6E)-farnesyl phosphate + H2O = (2E,6E)-farnesol + phosphate. The catalysed reaction is (2E,6E,10E)-geranylgeranyl diphosphate + H2O = (2E,6E,10E)-geranylgeranyl phosphate + phosphate + H(+). The enzyme catalyses (2E,6E,10E)-geranylgeranyl phosphate + H2O = (2E,6E,10E)-geranylgeraniol + phosphate. It carries out the reaction (2E)-geranyl diphosphate + H2O = (2E)-geranyl phosphate + phosphate + H(+). It catalyses the reaction (2E)-geranyl phosphate + H2O = (2E)-geraniol + phosphate. The catalysed reaction is 1,2-dihexadecanoyl-sn-glycero-3-phosphate + H2O = 1,2-dihexadecanoyl-sn-glycerol + phosphate. Functionally, magnesium-independent polyisoprenoid diphosphatase that catalyzes the sequential dephosphorylation of presqualene, farnesyl, geranyl and geranylgeranyl diphosphates. Functions in the innate immune response through the dephosphorylation of presqualene diphosphate which acts as a potent inhibitor of the signaling pathways contributing to polymorphonuclear neutrophils activation. May regulate the biosynthesis of cholesterol and related sterols by dephosphorylating presqualene and farnesyl diphosphate, two key intermediates in this biosynthetic pathway. May also play a role in protein prenylation by acting on farnesyl diphosphate and its derivative geranylgeranyl diphosphate, two precursors for the addition of isoprenoid anchors to membrane proteins. Has a lower activity towards phosphatidic acid (PA), but through phosphatidic acid dephosphorylation may participate in the biosynthesis of phospholipids and triacylglycerols. May also act on ceramide-1-P, lysophosphatidic acid (LPA) and sphing-4-enine 1-phosphate/sphingosine-1-phosphate. This Bos taurus (Bovine) protein is Polyisoprenoid diphosphate/phosphate phosphohydrolase PLPP6.